The following is an 882-amino-acid chain: Translation initiation factor IF-2 (882 aa).

A disordered region spans residues 57–211 (YIPANKTKDK…KDKSKPKVAT (155 aa)). Over residues 104–115 (TTSEKQKDKGEQ) the composition is skewed to basic and acidic residues. The segment covering 199–211 (RHKKDKSKPKVAT) has biased composition (basic residues). The region spanning 381-550 (ERPPVVTIMG…LIQAEVLELK (170 aa)) is the tr-type G domain. The interval 390-397 (GHVDHGKT) is G1. 390–397 (GHVDHGKT) serves as a coordination point for GTP. The segment at 415–419 (GITQH) is G2. Residues 436–439 (DTPG) form a G3 region. GTP-binding positions include 436 to 440 (DTPGH) and 490 to 493 (NKMD). The interval 490–493 (NKMD) is G4. A G5 region spans residues 526–528 (SAK).

It belongs to the TRAFAC class translation factor GTPase superfamily. Classic translation factor GTPase family. IF-2 subfamily.

Its subcellular location is the cytoplasm. One of the essential components for the initiation of protein synthesis. Protects formylmethionyl-tRNA from spontaneous hydrolysis and promotes its binding to the 30S ribosomal subunits. Also involved in the hydrolysis of GTP during the formation of the 70S ribosomal complex. This chain is Translation initiation factor IF-2, found in Helicobacter hepaticus (strain ATCC 51449 / 3B1).